The sequence spans 154 residues: SsrA-binding protein (154 aa).

Belongs to the SmpB family.

It is found in the cytoplasm. Functionally, required for rescue of stalled ribosomes mediated by trans-translation. Binds to transfer-messenger RNA (tmRNA), required for stable association of tmRNA with ribosomes. tmRNA and SmpB together mimic tRNA shape, replacing the anticodon stem-loop with SmpB. tmRNA is encoded by the ssrA gene; the 2 termini fold to resemble tRNA(Ala) and it encodes a 'tag peptide', a short internal open reading frame. During trans-translation Ala-aminoacylated tmRNA acts like a tRNA, entering the A-site of stalled ribosomes, displacing the stalled mRNA. The ribosome then switches to translate the ORF on the tmRNA; the nascent peptide is terminated with the 'tag peptide' encoded by the tmRNA and targeted for degradation. The ribosome is freed to recommence translation, which seems to be the essential function of trans-translation. This is SsrA-binding protein from Staphylococcus saprophyticus subsp. saprophyticus (strain ATCC 15305 / DSM 20229 / NCIMB 8711 / NCTC 7292 / S-41).